The primary structure comprises 189 residues: 3-isopropylmalate dehydratase small subunit (189 aa).

The protein belongs to the LeuD family. LeuD type 1 subfamily. As to quaternary structure, heterodimer of LeuC and LeuD.

The catalysed reaction is (2R,3S)-3-isopropylmalate = (2S)-2-isopropylmalate. The protein operates within amino-acid biosynthesis; L-leucine biosynthesis; L-leucine from 3-methyl-2-oxobutanoate: step 2/4. In terms of biological role, catalyzes the isomerization between 2-isopropylmalate and 3-isopropylmalate, via the formation of 2-isopropylmaleate. The polypeptide is 3-isopropylmalate dehydratase small subunit (Staphylococcus epidermidis (strain ATCC 35984 / DSM 28319 / BCRC 17069 / CCUG 31568 / BM 3577 / RP62A)).